A 160-amino-acid chain; its full sequence is D-aminoacyl-tRNA deacylase (160 aa).

The Gly-cisPro motif, important for rejection of L-amino acids motif lies at 137–138 (GP).

Belongs to the DTD family. In terms of assembly, homodimer.

It is found in the cytoplasm. It carries out the reaction glycyl-tRNA(Ala) + H2O = tRNA(Ala) + glycine + H(+). The enzyme catalyses a D-aminoacyl-tRNA + H2O = a tRNA + a D-alpha-amino acid + H(+). Its function is as follows. An aminoacyl-tRNA editing enzyme that deacylates mischarged D-aminoacyl-tRNAs. Also deacylates mischarged glycyl-tRNA(Ala), protecting cells against glycine mischarging by AlaRS. Acts via tRNA-based rather than protein-based catalysis; rejects L-amino acids rather than detecting D-amino acids in the active site. By recycling D-aminoacyl-tRNA to D-amino acids and free tRNA molecules, this enzyme counteracts the toxicity associated with the formation of D-aminoacyl-tRNA entities in vivo and helps enforce protein L-homochirality. This Chloroflexus aurantiacus (strain ATCC 29364 / DSM 637 / Y-400-fl) protein is D-aminoacyl-tRNA deacylase.